We begin with the raw amino-acid sequence, 300 residues long: N-acetylmannosamine kinase (300 aa).

ATP contacts are provided by residues 5 to 12 (ALDIGGTK) and 132 to 139 (GVGGGIVL). Zn(2+)-binding residues include histidine 156, cysteine 166, cysteine 168, and cysteine 173.

It belongs to the ROK (NagC/XylR) family. NanK subfamily. Homodimer.

The catalysed reaction is an N-acyl-D-mannosamine + ATP = an N-acyl-D-mannosamine 6-phosphate + ADP + H(+). It functions in the pathway amino-sugar metabolism; N-acetylneuraminate degradation; D-fructose 6-phosphate from N-acetylneuraminate: step 2/5. Functionally, catalyzes the phosphorylation of N-acetylmannosamine (ManNAc) to ManNAc-6-P. This chain is N-acetylmannosamine kinase, found in Haemophilus influenzae (strain 86-028NP).